Reading from the N-terminus, the 474-residue chain is Glycogen synthase (474 aa).

An ADP-alpha-D-glucose-binding site is contributed by K15.

This sequence belongs to the glycosyltransferase 1 family. Bacterial/plant glycogen synthase subfamily.

It carries out the reaction [(1-&gt;4)-alpha-D-glucosyl](n) + ADP-alpha-D-glucose = [(1-&gt;4)-alpha-D-glucosyl](n+1) + ADP + H(+). The protein operates within glycan biosynthesis; glycogen biosynthesis. In terms of biological role, synthesizes alpha-1,4-glucan chains using ADP-glucose. This chain is Glycogen synthase, found in Chlamydia trachomatis serovar L2b (strain UCH-1/proctitis).